Here is a 205-residue protein sequence, read N- to C-terminus: Large ribosomal subunit protein uL4 (205 aa).

The disordered stretch occupies residues 48-79 (KAQKSRSDVSGGGKKPWKQKGSGHARAGTTRS).

Belongs to the universal ribosomal protein uL4 family. In terms of assembly, part of the 50S ribosomal subunit.

One of the primary rRNA binding proteins, this protein initially binds near the 5'-end of the 23S rRNA. It is important during the early stages of 50S assembly. It makes multiple contacts with different domains of the 23S rRNA in the assembled 50S subunit and ribosome. In terms of biological role, forms part of the polypeptide exit tunnel. The protein is Large ribosomal subunit protein uL4 of Methylococcus capsulatus (strain ATCC 33009 / NCIMB 11132 / Bath).